Consider the following 498-residue polypeptide: Probable FAD-binding monooxygenase AlmA (498 aa).

Residues 4 to 24 (HIDILIVGAGISGIGIAAHLS) form a helical membrane-spanning segment. FAD-binding residues include Ser15, Glu36, Asp56, Phe62, and Val104. Residue 54-56 (RSD) coordinates NADP(+). Residues 184–190 (SGATAIT), 208–209 (RS), and 292–293 (RL) contribute to the NADP(+) site. Val395 is a binding site for FAD.

This sequence belongs to the FAD-binding monooxygenase family. The cofactor is FAD.

Its subcellular location is the cell membrane. It participates in hydrocarbon metabolism; alkane degradation. Is able to catalyze the degradation of n-alkanes with C chain lengths of 32 and 36. Probably allows Acinetobacter baylyi strain ADP1 to grow on the long-chain n-alkane dotriacontane (C32H66) as a sole carbon source. This is Probable FAD-binding monooxygenase AlmA from Acinetobacter baylyi (strain ATCC 33305 / BD413 / ADP1).